A 515-amino-acid polypeptide reads, in one-letter code: 1-pyrroline-5-carboxylate dehydrogenase (515 aa).

Active-site residues include glutamate 286 and cysteine 320.

Belongs to the aldehyde dehydrogenase family. RocA subfamily.

It catalyses the reaction L-glutamate 5-semialdehyde + NAD(+) + H2O = L-glutamate + NADH + 2 H(+). It participates in amino-acid degradation; L-proline degradation into L-glutamate; L-glutamate from L-proline: step 2/2. The polypeptide is 1-pyrroline-5-carboxylate dehydrogenase (Geobacillus kaustophilus (strain HTA426)).